Reading from the N-terminus, the 729-residue chain is MTEAQTRTEPSESSESSEAVAPAITSAADSAPEAPPATTAPAIENPLPEDRYLNRELSWLDFNARVLALAADPSLPLLERAKFLAIFASNLDEFYMVRVAGLKRRDEMGLSVRSADGLSPREQLRRISERTQQIASRHAHVFLDSVRPALADEGIVIVTWAQLDDAERAKLSTYFHEQVFPVLTPLAVDPAHPFPFVSGLSLNLAITVKHPDDGGQHFARIKVPDNVDRFVELPARGDSPGVVRFLPMEELIAAFLTVLFPGLEIVEHHAFRITRNADFEVEEDRDEDLLQALERELARRRFGSPVRLEVSDDMTESMLELLLRELDVAPGDVVEVPGLLDLSSLWQIYSVDRPGLKDPPFVPATPSAFGERETPKSIFSALRDGDVLVHHPYDSFSTTVQRFIEQAAADPNVLAIKQTLYRTSGDSPIVNALIDAAEAGKQVVALVEIKARFDEQANIKWARALEQAGVHVVYGLIGLKTHCKTCLVVRREGSTIRRYCHIGTGNYNPKTARLYEDIGLLTAAPDIGADLTDLFNSLTGYSRKESYRNLLVAPYGVRRGIIERIDREIAATRDGAEGRIRLKANALVDEQVIDALYRASQAGVQVEVVVRGICALRPGEPGFSDNITVRSILGRFLEHSRIIHFRAIDEYWIGSADMMHRNLDRRVEVMAQVKDPRLTTQLNDIFDSAADPRTRCWELGSDGHWTALPQEGHSVRDHQISLMERRRHP.

A disordered region spans residues 1–46 (MTEAQTRTEPSESSESSEAVAPAITSAADSAPEAPPATTAPAIENP). The span at 25–42 (TSAADSAPEAPPATTAPA) shows a compositional bias: low complexity. N90 lines the ATP pocket. R422 and R452 together coordinate Mg(2+). The active-site Phosphohistidine intermediate is H482. ATP is bound by residues Y515, R611, and H639.

This sequence belongs to the polyphosphate kinase 1 (PPK1) family. Requires Mg(2+) as cofactor. An intermediate of this reaction is the autophosphorylated ppk in which a phosphate is covalently linked to a histidine residue through a N-P bond.

The catalysed reaction is [phosphate](n) + ATP = [phosphate](n+1) + ADP. Functionally, catalyzes the reversible transfer of the terminal phosphate of ATP to form a long-chain polyphosphate (polyP). This is Polyphosphate kinase from Mycolicibacterium gilvum (strain PYR-GCK) (Mycobacterium gilvum (strain PYR-GCK)).